Here is a 507-residue protein sequence, read N- to C-terminus: ATP synthase subunit alpha, chloroplastic (507 aa).

Residue G170–T177 coordinates ATP.

Belongs to the ATPase alpha/beta chains family. F-type ATPases have 2 components, CF(1) - the catalytic core - and CF(0) - the membrane proton channel. CF(1) has five subunits: alpha(3), beta(3), gamma(1), delta(1), epsilon(1). CF(0) has four main subunits: a, b, b' and c.

It is found in the plastid. Its subcellular location is the chloroplast thylakoid membrane. The enzyme catalyses ATP + H2O + 4 H(+)(in) = ADP + phosphate + 5 H(+)(out). Produces ATP from ADP in the presence of a proton gradient across the membrane. The alpha chain is a regulatory subunit. This chain is ATP synthase subunit alpha, chloroplastic, found in Sorghum bicolor (Sorghum).